Here is a 356-residue protein sequence, read N- to C-terminus: A-type ATP synthase subunit C (356 aa).

This sequence belongs to the V-ATPase V0D/AC39 subunit family. Has multiple subunits with at least A(3), B(3), C, D, E, F, H, I and proteolipid K(x).

The protein localises to the cell membrane. Its function is as follows. Component of the A-type ATP synthase that produces ATP from ADP in the presence of a proton gradient across the membrane. The polypeptide is A-type ATP synthase subunit C (Thermoplasma acidophilum (strain ATCC 25905 / DSM 1728 / JCM 9062 / NBRC 15155 / AMRC-C165)).